A 575-amino-acid polypeptide reads, in one-letter code: Potassium-transporting ATPase potassium-binding subunit (575 aa).

The next 12 membrane-spanning stretches (helical) occupy residues 3–23 (FEGV…VPFF), 69–89 (AVLA…LLQG), 136–156 (CFQF…IAFI), 178–198 (ILMP…VPQS), 266–286 (LLEI…FGVL), 293–313 (GWVL…VAAL), 340–360 (FGWA…TGAV), 367–387 (LTPL…IWGG), 391–411 (GIAY…LMVG), 431–451 (IIFL…LAIP), 498–518 (VVLL…AGGL), and 543–563 (AGTI…LGPI).

This sequence belongs to the KdpA family. In terms of assembly, the system is composed of three essential subunits: KdpA, KdpB and KdpC.

It is found in the cell inner membrane. Functionally, part of the high-affinity ATP-driven potassium transport (or Kdp) system, which catalyzes the hydrolysis of ATP coupled with the electrogenic transport of potassium into the cytoplasm. This subunit binds the periplasmic potassium ions and delivers the ions to the membrane domain of KdpB through an intramembrane tunnel. This Gloeobacter violaceus (strain ATCC 29082 / PCC 7421) protein is Potassium-transporting ATPase potassium-binding subunit.